We begin with the raw amino-acid sequence, 729 residues long: Catalase-peroxidase (729 aa).

The segment at residues 95–217 is a cross-link (tryptophyl-tyrosyl-methioninium (Trp-Tyr) (with M-243)); the sequence is WHSAGTYRIT…LAAVQMGLIY (123 aa). The active-site Proton acceptor is the H96. The segment at residues 217–243 is a cross-link (tryptophyl-tyrosyl-methioninium (Tyr-Met) (with W-95)); sequence YVNPEGPNGKPDPIAAATDIRETFFRM. Residue H258 participates in heme b binding.

This sequence belongs to the peroxidase family. Peroxidase/catalase subfamily. In terms of assembly, homodimer or homotetramer. It depends on heme b as a cofactor. Post-translationally, formation of the three residue Trp-Tyr-Met cross-link is important for the catalase, but not the peroxidase activity of the enzyme.

It catalyses the reaction H2O2 + AH2 = A + 2 H2O. The catalysed reaction is 2 H2O2 = O2 + 2 H2O. Bifunctional enzyme with both catalase and broad-spectrum peroxidase activity. This Nitrobacter hamburgensis (strain DSM 10229 / NCIMB 13809 / X14) protein is Catalase-peroxidase.